The sequence spans 297 residues: 4-hydroxy-tetrahydrodipicolinate synthase (297 aa).

Residue Thr49 coordinates pyruvate. The active-site Proton donor/acceptor is Tyr137. Residue Lys166 is the Schiff-base intermediate with substrate of the active site. Ile208 serves as a coordination point for pyruvate.

This sequence belongs to the DapA family. As to quaternary structure, homotetramer; dimer of dimers.

The protein resides in the cytoplasm. The catalysed reaction is L-aspartate 4-semialdehyde + pyruvate = (2S,4S)-4-hydroxy-2,3,4,5-tetrahydrodipicolinate + H2O + H(+). It participates in amino-acid biosynthesis; L-lysine biosynthesis via DAP pathway; (S)-tetrahydrodipicolinate from L-aspartate: step 3/4. Its function is as follows. Catalyzes the condensation of (S)-aspartate-beta-semialdehyde [(S)-ASA] and pyruvate to 4-hydroxy-tetrahydrodipicolinate (HTPA). The polypeptide is 4-hydroxy-tetrahydrodipicolinate synthase (Chlorobium phaeobacteroides (strain BS1)).